We begin with the raw amino-acid sequence, 99 residues long: Large ribosomal subunit protein bL27 (99 aa).

A propeptide spanning residues 1-10 (MKLIFDIQLF) is cleaved from the precursor.

The protein belongs to the bacterial ribosomal protein bL27 family. In terms of processing, the N-terminus is cleaved by ribosomal processing cysteine protease Prp.

The sequence is that of Large ribosomal subunit protein bL27 from Caldicellulosiruptor saccharolyticus (strain ATCC 43494 / DSM 8903 / Tp8T 6331).